The chain runs to 510 residues: Calcium-dependent lipid-binding protein (510 aa).

A helical transmembrane segment spans residues 1-21; that stretch reads MGLISGILFGIIFGVALMAGW. 2 consecutive SMP-LTD domains span residues 66-248 and 66-250; these read AFEQ…VPIG and AFEQ…IGGI. Residues 226-488 form a phospholipid binding region; the sequence is DDTVDTIVKD…FMGRTITGQS (263 aa). C2 domains are found at residues 242 to 362 and 246 to 364; these read RIVV…ELEL and PIGG…ELNL. Residues Lys-278, Glu-279, Asp-285, Asp-333, Lys-334, Asp-335, Asp-339, and Glu-340 each contribute to the Ca(2+) site. Residues 390–417 adopt a coiled-coil conformation; the sequence is EFNKEEQMAALEDEKKIMEERKRLKEAG. A C2 3 domain is found at 461 to 500; the sequence is MVGSGFGAVGSGLSKAGRFMGRTITGQSSKRSGSSTPVNT. Positions 484 to 510 are disordered; that stretch reads ITGQSSKRSGSSTPVNTVPENDGAKQQ.

The protein belongs to the synaptotagmin family. As to quaternary structure, interacts with the biotrophic pathogenic fungi Microbotryum violaceum effector MVLG_01732. Ca(2+) is required as a cofactor. Mostly expressed in rosette leaves and flowers, to lower extent, in cauline leaves, roots and stems, and, at low levels, in siliques.

The protein localises to the nucleus membrane. In terms of biological role, may be involved in membrane trafficking. Acts as a repressor of abiotic stress (e.g. drought and salt) responses by binding specifically to the promoter of THAS1 to regulate its transcription. Binds to membrane lipid ceramides. This is Calcium-dependent lipid-binding protein from Arabidopsis thaliana (Mouse-ear cress).